Here is a 2963-residue protein sequence, read N- to C-terminus: tRNA nuclease CdiA (2963 aa).

The first 29 residues, 1–29 (MIPIYLRQKLISYALIYLVAIQPIMPVMA), serve as a signal peptide directing secretion. The interval 35–320 (AQGSTALDKA…AQGNITLNSH (286 aa)) is two-partner system transport domain (TPS). The FHA-1 stretch occupies residues 573 to 1074 (GNVVAQEHAQ…MVLNTASLLN (502 aa)). The segment at 1075 to 1342 (RRDGFSVTEK…KPLTRAQLSD (268 aa)) is receptor binding domain (RBD). The interval 1343 to 1528 (YPLPDSNNGL…LAKAEQAHLQ (186 aa)) is YP domain. Residues 1529–1751 (GSVISGNKVE…ATLQAERDVN (223 aa)) are periplasmic FHA-1 repeat (pFR). Positions 1759 to 1770 (TRNQHIDSEDKT) are enriched in basic and acidic residues. Disordered regions lie at residues 1759-1787 (TRNQ…LTAS) and 1992-2012 (SKSS…SASA). The interval 1762–2314 (QHIDSEDKTT…DSDNYNSIQK (553 aa)) is FHA-2. Positions 1771-1782 (TGYTRSTLSSGG) are enriched in polar residues. A VEDN CT cleavage motif motif is present at residues 2694–2697 (VEDN). Residues 2694-2963 (VEDNNLSFGK…TGRVRNFHPN (270 aa)) form a C-terminal effector domain (CT) region.

In the N-terminal section; belongs to the CdiA toxin family. The protein in the C-terminal section; belongs to the bacterial EndoU family. Forms a 1:1 complex with cognate immunity protein CdiI.

It localises to the secreted. It is found in the target cell. The protein resides in the target cell cytoplasm. Functionally, toxic component of a toxin-immunity protein module, which functions as a cellular contact-dependent growth inhibition (CDI) system. CDI modules allow bacteria to communicate with and inhibit the growth of closely related neighboring bacteria in a contact-dependent fashion. Targeting of the CT domain (residues 2824-2963) in the absence of immunity protein inhibits cell growth and causes tRNA(UUC-Glu) cleavage in the anticodon loop; expression of cognate immunity protein CdiI-43969 neutralizes growth inhibition and tRNA(UUC-Glu) remains intact, whereas non-cognate immunity proteins do not confer protection from the toxic effects. In terms of biological role, the CdiA protein is thought to be exported from the cell through the central lumen of CdiB, the other half of its two-partner system (TPS). The TPS domain probably remains associated with CdiB while the FHA-1 domain forms an extended filament with the receptor-binding domain (RBD) at its extremity; in the secretion arrested state the C-terminus of the RBD and YP domains form a hairpin-like structure as the FHA-2, PT and CT domains are periplasmic. The YP domain is probably responsible for this arrest at the point where it re-enters the host cell periplasm. Upon binding to a target cell outer membrane receptor a signal is transmitted to activate secretion. The filament elongates slightly, the rest of CdiA is secreted and the FHA-2 domain becomes stably associated with the target cell's outer membrane where it facilitates entry of the toxic CT domain into the target cell periplasm. From there the toxic CT domain is cleaved and gains access to the target cell cytoplasm via an inner membrane protein. This is tRNA nuclease CdiA from Yersinia mollaretii (strain ATCC 43969 / DSM 18520 / CIP 103324 / CNY 7263 / WAIP 204).